A 484-amino-acid chain; its full sequence is Protein nucleotidyltransferase YdiU (484 aa).

8 residues coordinate ATP: G81, G83, R84, K103, D115, G116, R166, and R173. The active-site Proton acceptor is the D244. Mg(2+) is bound by residues N245 and D254. D254 contributes to the ATP binding site.

It belongs to the SELO family. It depends on Mg(2+) as a cofactor. Mn(2+) is required as a cofactor.

The catalysed reaction is L-seryl-[protein] + ATP = 3-O-(5'-adenylyl)-L-seryl-[protein] + diphosphate. It carries out the reaction L-threonyl-[protein] + ATP = 3-O-(5'-adenylyl)-L-threonyl-[protein] + diphosphate. It catalyses the reaction L-tyrosyl-[protein] + ATP = O-(5'-adenylyl)-L-tyrosyl-[protein] + diphosphate. The enzyme catalyses L-histidyl-[protein] + UTP = N(tele)-(5'-uridylyl)-L-histidyl-[protein] + diphosphate. The catalysed reaction is L-seryl-[protein] + UTP = O-(5'-uridylyl)-L-seryl-[protein] + diphosphate. It carries out the reaction L-tyrosyl-[protein] + UTP = O-(5'-uridylyl)-L-tyrosyl-[protein] + diphosphate. Functionally, nucleotidyltransferase involved in the post-translational modification of proteins. It can catalyze the addition of adenosine monophosphate (AMP) or uridine monophosphate (UMP) to a protein, resulting in modifications known as AMPylation and UMPylation. The chain is Protein nucleotidyltransferase YdiU from Shewanella baltica (strain OS223).